The sequence spans 244 residues: Triosephosphate isomerase (244 aa).

8-10 contributes to the substrate binding site; that stretch reads NWK. The Electrophile role is filled by His-93. Glu-161 (proton acceptor) is an active-site residue. Residues Gly-167, Ser-206, and 227–228 each bind substrate; that span reads GG.

The protein belongs to the triosephosphate isomerase family. As to quaternary structure, homodimer.

It localises to the cytoplasm. It carries out the reaction D-glyceraldehyde 3-phosphate = dihydroxyacetone phosphate. The protein operates within carbohydrate biosynthesis; gluconeogenesis. It participates in carbohydrate degradation; glycolysis; D-glyceraldehyde 3-phosphate from glycerone phosphate: step 1/1. Functionally, involved in the gluconeogenesis. Catalyzes stereospecifically the conversion of dihydroxyacetone phosphate (DHAP) to D-glyceraldehyde-3-phosphate (G3P). This Deinococcus radiodurans (strain ATCC 13939 / DSM 20539 / JCM 16871 / CCUG 27074 / LMG 4051 / NBRC 15346 / NCIMB 9279 / VKM B-1422 / R1) protein is Triosephosphate isomerase.